Reading from the N-terminus, the 170-residue chain is Peptide deformylase (170 aa).

Fe cation is bound by residues C91 and H133. E134 is a catalytic residue. H137 contributes to the Fe cation binding site.

It belongs to the polypeptide deformylase family. The cofactor is Fe(2+).

The enzyme catalyses N-terminal N-formyl-L-methionyl-[peptide] + H2O = N-terminal L-methionyl-[peptide] + formate. Removes the formyl group from the N-terminal Met of newly synthesized proteins. Requires at least a dipeptide for an efficient rate of reaction. N-terminal L-methionine is a prerequisite for activity but the enzyme has broad specificity at other positions. The chain is Peptide deformylase from Aliivibrio fischeri (strain ATCC 700601 / ES114) (Vibrio fischeri).